A 1275-amino-acid chain; its full sequence is Inner capsid protein lambda-1 (1275 aa).

Residues 1-12 (MKRIPRKTRGKS) show a composition bias toward basic residues. A disordered region spans residues 1-147 (MKRIPRKTRG…NVDNEGGDNQ (147 aa)). Over residues 18-35 (DSTERADDGSAQLRDKQS) the composition is skewed to basic and acidic residues. Positions 55 to 66 (TRPSLQTVQKAT) are enriched in polar residues. Basic and acidic residues-rich tracts occupy residues 80 to 98 (AVDK…HVEA) and 105 to 117 (ATKR…DKQK). Polar residues predominate over residues 118–139 (AQVTYNDTGINNANELSRSGNV). The segment at 181-203 (YQCHVCSAVLFSPLDLDAHVASH) adopts a C2H2-type zinc-finger fold.

This sequence belongs to the turreted BTV-fold inner capsid family. In terms of assembly, homodecamer; each decamer is made up of two conformers of VP2, called VP2A and VP2B. 12 homodecamers assemble to form an icosahedral capsid. Interacts with protein mu-NS; in viral inclusions. Requires Mg(2+) as cofactor. It depends on Mn(2+) as a cofactor.

It localises to the virion. The enzyme catalyses ATP + H2O = ADP + phosphate + H(+). Its function is as follows. Inner capsid protein that self-assembles to form an icosahedral capsid with a T=2 symmetry, which consists of 120 copies of VP2, with channels at each of its five-fold vertices. This capsid constitutes the innermost concentric layer of the viral mature particle. In terms of biological role, displays NTPase, RNA 5'-triphosphatase (RTPase) and RNA helicase activities and probably participates in transcription of the viral genome. Helicase activity might be involved in unwinding or reannealing dsRNA during RNA synthesis. RTPase enzymatic activity represents the first step in RNA capping, which yields a 5'-diphosphorylated plus-strand RNA. This is Inner capsid protein lambda-1 from Reovirus type 2 (strain D5/Jones) (T2J).